Here is a 241-residue protein sequence, read N- to C-terminus: Neuroendocrine secretory protein 55 (241 aa).

An N-terminal signal peptide occupies residues 1 to 46 (MDRRSRPQLGRRARHNYNDLCPPIGRRAATALLWLSCSIALLRALA). Residues 71–241 (AAQVFPEPPE…KRGAIPIRRH (171 aa)) form a disordered region. A compositionally biased stretch (acidic residues) spans 97–125 (EYQEEEFDYESETESESEIESETEFETES). The span at 167–177 (PDASPSRAPPS) shows a compositional bias: low complexity. Positions 182 to 198 (ESPRQGEEPEDKDPRDP) are enriched in basic and acidic residues. Over residues 212 to 221 (QHRCKPKKPT) the composition is skewed to basic residues.

Belongs to the NESP55 family. Post-translationally, binds keratan sulfate chains. May be proteolytically processed to give rise to a number of active peptides. As to expression, highly expressed in adrenal medulla and anterior and posterior pituitary. In the brain, detected in hypothalamus, hippocampus, caudate nucleus, thalamus and, in significantly lower amounts, in the cerebellum.

The protein resides in the cytoplasmic vesicle. The protein localises to the secretory vesicle. Its subcellular location is the secreted. In Bos taurus (Bovine), this protein is Neuroendocrine secretory protein 55.